The sequence spans 263 residues: Lens fiber major intrinsic protein (263 aa).

Over Met-1–Phe-9 the chain is Cytoplasmic. Residues Trp-10–Gly-29 form a helical membrane-spanning segment. Topologically, residues Ala-30–Val-41 are extracellular. Residues Leu-42–Ile-59 traverse the membrane as a helical segment. Residues Gly-60–His-61 lie on the Cytoplasmic side of the membrane. Residues Val-62–Ile-77 constitute an intramembrane region (discontinuously helical). The NPA 1 motif lies at Asn-68–Ala-70. The Cytoplasmic segment spans residues Gly-78 to Ser-82. A helical membrane pass occupies residues Leu-83 to Gly-106. The Extracellular segment spans residues Val-107–Leu-127. A helical membrane pass occupies residues Gly-128–Thr-148. At Tyr-149 to Arg-156 the chain is on the cytoplasmic side. Residues Leu-157–Gly-175 form a helical membrane-spanning segment. Residues Leu-176–Tyr-178 are Extracellular-facing. The discontinuously helical intramembrane region spans Thr-179–Val-193. The NPA 2 motif lies at Asn-184 to Ala-186. Over Leu-194 to Asn-200 the chain is Extracellular. A helical membrane pass occupies residues His-201–Ile-222. Residues Leu-223–Leu-263 are Cytoplasmic-facing. Residues Met-227–Leu-237 are interaction with CALM. The disordered stretch occupies residues Arg-241–Leu-263.

Belongs to the MIP/aquaporin (TC 1.A.8) family. In terms of assembly, homotetramer; each monomer provides an independent water pore. Two homotetramers on opposing membranes can dimerize, forming a cell-cell junction. Interacts with CALM; the calcium-calmodulin/CALM complex interacts with the cytoplasmic domains of two aquaporins, leading to channel closure.

The protein localises to the cell membrane. The protein resides in the cell junction. The catalysed reaction is H2O(in) = H2O(out). Its activity is regulated as follows. The water channel activity is inhibited by calcium through calmodulin/CALM. Its function is as follows. Aquaporins form homotetrameric transmembrane channels, with each monomer independently mediating water transport across the plasma membrane along its osmotic gradient. Specifically expressed in lens fiber cells, this aquaporin is crucial for maintaining lens water homeostasis and transparency. Beyond water permeability, it also acts as a cell-to-cell adhesion molecule, forming thin junctions between lens fiber cells that are essential for maintaining the ordered structure and transparency of the lens. In Lithobates pipiens (Northern leopard frog), this protein is Lens fiber major intrinsic protein.